Reading from the N-terminus, the 1681-residue chain is Meiosis regulator and mRNA stability factor 1 (1681 aa).

Residues 340–477 (IGVFWDIENC…ALLHHAHELI (138 aa)) form the NYN domain. Disordered regions lie at residues 576 to 595 (VNET…PKKV) and 638 to 717 (QMQS…DVVF). Residues 638 to 647 (QMQSKSNKTS) are compositionally biased toward polar residues. Residues 648-658 (QQEKDKKRNGD) are compositionally biased toward basic and acidic residues. The segment covering 659–690 (KQGTLSQSSPLCTNQMLQTARNVGTDNTASKS) has biased composition (polar residues). The span at 692–715 (QKRDDTTRKSNADSQKEQKNKEDV) shows a compositional bias: basic and acidic residues. An RRM domain is found at 779–858 (ADIQIGNLDY…KRIQVSLATG (80 aa)). HTH OST-type domains lie at 863 to 937 (SLSL…SPMG), 991 to 1067 (SLKT…HNKP), 1087 to 1161 (QLIQ…LTHR), 1163 to 1238 (QVKR…IPKR), 1247 to 1321 (RTKQ…LTEM), 1323 to 1398 (RIKA…INRK), 1399 to 1472 (SLRS…SVQL), and 1474 to 1548 (SLYV…LKND). Residues 1637–1648 (EPSTQNICPQES) show a composition bias toward polar residues. The segment at 1637–1662 (EPSTQNICPQESKSTKELPESPVKRQ) is disordered. Residues 1649–1659 (KSTKELPESPV) show a composition bias toward basic and acidic residues.

It localises to the peroxisome. Essential regulator of oogenesis required for female meiotic progression to repress transposable elements and preventing their mobilization, which is essential for the germline integrity. The sequence is that of Meiosis regulator and mRNA stability factor 1 from Xenopus tropicalis (Western clawed frog).